A 188-amino-acid chain; its full sequence is SRP-independent targeting protein 3 (188 aa).

The chain crosses the membrane as a helical span at residues 27–47 (TIIMYIRILYCSSIGISWIIY). The residue at position 157 (serine 157) is a Phosphoserine. Residues 157 to 188 (SLFGGMGQTGPKTDKKSIEEAERAGNAGVKAE) are disordered. A compositionally biased stretch (basic and acidic residues) spans 168 to 179 (KTDKKSIEEAER).

Belongs to the PHO88 family. Interacts with ENV10/SND2. ENV10/SND2 and PHO88/SND3 form a complex with the translocon in the endoplasmic reticulum membrane.

The protein resides in the endoplasmic reticulum membrane. Its subcellular location is the mitochondrion. Functions in the SND pathway, a SRP (signal recognition particle) and GET (guided entry of tail-anchored proteins) independent pathway for targeting a broad range of substrate proteins to the endoplasmic reticulum. SND functions in parallel to GET in targeting proteins with downstream hydrophobic motifs. Involved in inorganic phosphate uptake. Also involved in telomere length regulation and maintenance. The polypeptide is SRP-independent targeting protein 3 (Saccharomyces cerevisiae (strain ATCC 204508 / S288c) (Baker's yeast)).